Here is a 259-residue protein sequence, read N- to C-terminus: UPF0246 protein PputW619_0896 (259 aa).

This sequence belongs to the UPF0246 family.

In Pseudomonas putida (strain W619), this protein is UPF0246 protein PputW619_0896.